The primary structure comprises 146 residues: Hemoglobin subunit beta (146 aa).

V1 is modified (N-acetylvaline). Positions 2-146 (HLSSEEKGLI…VANALAHKYH (145 aa)) constitute a Globin domain. T12 carries the post-translational modification Phosphothreonine. K59 carries the N6-acetyllysine modification. Heme b is bound at residue H63. K82 is modified (N6-acetyllysine). Position 92 (H92) interacts with heme b. C93 is modified (S-nitrosocysteine). K144 bears the N6-acetyllysine mark.

Belongs to the globin family. As to quaternary structure, heterotetramer of two alpha chains and two beta chains. In terms of tissue distribution, red blood cells.

Functionally, involved in oxygen transport from the lung to the various peripheral tissues. This chain is Hemoglobin subunit beta (HBB), found in Potorous tridactylus (Potoroo).